Here is an 875-residue protein sequence, read N- to C-terminus: MGEVVRLTNSSTGGPVFVYVKDGKIIRMTPMDFDDAVDAPSWKIEARGKTFTPPRKTSIAPYTAGFKSMIYSDLRIPYPMKRKSFDPNGERNPQLRGAGLSKQDPWSDYERISWDEATDIVVAEINRIKHAYGPSAILSTPSSHHMWGNVGYRHSTYFRFMNMMGFTYADHNPDSWEGWHWGGMHMWGFSWRLGNPEQYDLLEDGLKHAEMIVFWSSDPETNSGIYAGFESNIRRQWLKDLGVDFVFIDPHMNHTARLVADKWFSPKIGTDHALSFAIAYTWLKEDSYDKEYVAANAHGFEEWADYVLGKTDGTPKTCEWAEEESGVPACEIRALARQWAKKNTYLAAGGLGGWGGACRASHGIEWARGMIALATMQGMGKPGSNMWSTTQGVPLDYEFYFPGYAEGGISGDCENSAAGFKFAWRMFDGKTTFPSPSNLNTSAGQHIPRLKIPECIMGGKFQWSGKGFAGGDISHQLHQYEYPAPGYSKIKMFWKYGGPHLGTMTATNRYAKMYTHDSLEFVVSQSIWFEGEVPFADIILPACTNFERWDISEFANCSGYIPDNYQLCNHRVISLQAKCIEPVGESMSDYEIYRLFAKKLNIEEMFSEGKDELAWCEQYFNATDMPKYMTWDEFFKKGYFVVPDNPNRKKTVALRWFAEGREKDTPDWGPRLNNQVCRKGLQTTTGKVEFIATSLKNFEEQGYIDEHRPSMHTYVPAWESQKHSPLAVKYPLGMLSPHPRFSMHTMGDGKNSYMNYIKDHRVEVDGYKYWIMRVNSIDAEARGIKNGDLIRAYNDRGSVILAAQVTECLQPGTVHSYESCAVYDPLGTAGKSADRGGCINILTPDRYISKYACGMANNTALVEIEKWDGDKYEIY.

The tract at residues 82–104 (RKSFDPNGERNPQLRGAGLSKQD) is disordered. Position 175 (Ser-175) interacts with Mo-bis(molybdopterin guanine dinucleotide).

The protein belongs to the prokaryotic molybdopterin-containing oxidoreductase family. As to quaternary structure, heterodimer of a large and a small subunit. The cofactor is Mo-bis(molybdopterin guanine dinucleotide).

It catalyses the reaction 1,2,3,5-tetrahydroxybenzene + 1,2,3-trihydroxybenzene = 1,2,3,5-tetrahydroxybenzene + 1,3,5-trihydroxybenzene. Isomerization of pyrogallol to phloroglucin. The chain is Pyrogallol hydroxytransferase large subunit (athL) from Pelobacter acidigallici.